The chain runs to 390 residues: GTPase Obg (390 aa).

Residues 1–159 (MKFVDEASIL…RDLLLELMLL (159 aa)) form the Obg domain. Positions 127–147 (NTRFKSSVNRTPRQKTNGTPG) are disordered. The segment covering 129 to 145 (RFKSSVNRTPRQKTNGT) has biased composition (polar residues). In terms of domain architecture, OBG-type G spans 160–333 (ADVGMLGMPN…LCWDVMTFII (174 aa)). GTP is bound by residues 166–173 (GMPNAGKS), 191–195 (FTTLV), 213–216 (DIPG), 283–286 (NKID), and 314–316 (SAA). Residues Ser-173 and Thr-193 each contribute to the Mg(2+) site.

Belongs to the TRAFAC class OBG-HflX-like GTPase superfamily. OBG GTPase family. In terms of assembly, monomer. It depends on Mg(2+) as a cofactor.

The protein resides in the cytoplasm. Its function is as follows. An essential GTPase which binds GTP, GDP and possibly (p)ppGpp with moderate affinity, with high nucleotide exchange rates and a fairly low GTP hydrolysis rate. Plays a role in control of the cell cycle, stress response, ribosome biogenesis and in those bacteria that undergo differentiation, in morphogenesis control. The sequence is that of GTPase Obg from Salmonella paratyphi A (strain ATCC 9150 / SARB42).